The primary structure comprises 704 residues: Capsule polysaccharide modification protein LipA (704 aa).

It localises to the cell inner membrane. In terms of biological role, involved in the phospholipid modification of the capsular polysaccharide, a strong requirement for its translocation to the cell surface. The polypeptide is Capsule polysaccharide modification protein LipA (lipA) (Neisseria meningitidis serogroup B (strain ATCC BAA-335 / MC58)).